Consider the following 364-residue polypeptide: Acetylserotonin O-methyltransferase 1 (364 aa).

Residues G208, D231, D251, and K265 each contribute to the S-adenosyl-L-homocysteine site. H269 acts as the Proton acceptor in catalysis. Active-site residues include E300 and E330.

It belongs to the class I-like SAM-binding methyltransferase superfamily. Cation-independent O-methyltransferase family. As to quaternary structure, homodimer. As to expression, expressed in leaves, stems and flowers.

It is found in the cytoplasm. It carries out the reaction N-acetylserotonin + S-adenosyl-L-methionine = melatonin + S-adenosyl-L-homocysteine + H(+). Its pathway is aromatic compound metabolism; melatonin biosynthesis; melatonin from serotonin: step 1/2. Functionally, methyltransferase which catalyzes the transfer of a methyl group onto N-acetylserotonin, producing melatonin (N-acetyl-5-methoxytryptamine). The sequence is that of Acetylserotonin O-methyltransferase 1 from Oryza sativa subsp. japonica (Rice).